The chain runs to 260 residues: DNA repair protein RecO (260 aa).

Belongs to the RecO family.

In terms of biological role, involved in DNA repair and RecF pathway recombination. This is DNA repair protein RecO from Levilactobacillus brevis (strain ATCC 367 / BCRC 12310 / CIP 105137 / JCM 1170 / LMG 11437 / NCIMB 947 / NCTC 947) (Lactobacillus brevis).